A 183-amino-acid polypeptide reads, in one-letter code: Ribosome-recycling factor (183 aa).

Belongs to the RRF family.

It localises to the cytoplasm. Functionally, responsible for the release of ribosomes from messenger RNA at the termination of protein biosynthesis. May increase the efficiency of translation by recycling ribosomes from one round of translation to another. The chain is Ribosome-recycling factor from Mycoplasmoides gallisepticum (strain R(low / passage 15 / clone 2)) (Mycoplasma gallisepticum).